A 324-amino-acid polypeptide reads, in one-letter code: Phosphate transport system permease protein PstC 2 (324 aa).

The next 6 membrane-spanning stretches (helical) occupy residues 30-50 (ASAA…FLLV), 90-110 (LSSI…AVFL), 125-145 (MVDL…IFVL), 174-194 (AGGG…LPIV), 237-257 (VAAS…VLVI), and 290-310 (PLPT…TFLV). Residues 85-314 (FMVTALSSIT…VLTFLVNAAA (230 aa)) form the ABC transmembrane type-1 domain.

Belongs to the binding-protein-dependent transport system permease family. CysTW subfamily.

The protein resides in the cell membrane. Functionally, part of the binding-protein-dependent transport system for phosphate; probably responsible for the translocation of the substrate across the membrane. The sequence is that of Phosphate transport system permease protein PstC 2 (pstC2) from Mycobacterium bovis (strain ATCC BAA-935 / AF2122/97).